We begin with the raw amino-acid sequence, 233 residues long: Protein Thf1 (233 aa).

Residues 183–204 (DKFSKDLELYRSNLDKMTQALA) are a coiled coil. The tract at residues 212 to 233 (ADRKKREQRQQQASTPVAPPNE) is disordered.

Belongs to the THF1 family.

In terms of biological role, may be involved in photosynthetic membrane biogenesis. The sequence is that of Protein Thf1 from Nostoc sp. (strain PCC 7120 / SAG 25.82 / UTEX 2576).